A 747-amino-acid chain; its full sequence is Pentatricopeptide repeat-containing protein At5g39710 (747 aa).

15 PPR repeats span residues Thr133–Pro167, Gly168–Pro203, Asn204–Pro238, Asn239–Pro273, Asn274–Leu308, Asp309–Pro343, Ser344–Pro378, Asn379–Pro413, Ser414–Pro448, Asp449–Pro483, Asp484–Pro518, Asp519–Pro553, Asp554–Pro588, Glu604–Pro638, and Asp639–Leu673.

The protein belongs to the PPR family. P subfamily.

This is Pentatricopeptide repeat-containing protein At5g39710 (EMB2745) from Arabidopsis thaliana (Mouse-ear cress).